Consider the following 213-residue polypeptide: Protein GrpE (213 aa).

The disordered stretch occupies residues 1 to 61 (MEQGEKQVME…AEKAPTAEEL (61 aa)). Positions 13–35 (TYDEPEREQPIEEEAAPQPEEES) are enriched in acidic residues.

Belongs to the GrpE family. As to quaternary structure, homodimer.

It is found in the cytoplasm. Its function is as follows. Participates actively in the response to hyperosmotic and heat shock by preventing the aggregation of stress-denatured proteins, in association with DnaK and GrpE. It is the nucleotide exchange factor for DnaK and may function as a thermosensor. Unfolded proteins bind initially to DnaJ; upon interaction with the DnaJ-bound protein, DnaK hydrolyzes its bound ATP, resulting in the formation of a stable complex. GrpE releases ADP from DnaK; ATP binding to DnaK triggers the release of the substrate protein, thus completing the reaction cycle. Several rounds of ATP-dependent interactions between DnaJ, DnaK and GrpE are required for fully efficient folding. The sequence is that of Protein GrpE from Geobacillus kaustophilus (strain HTA426).